We begin with the raw amino-acid sequence, 79 residues long: Large ribosomal subunit protein bL31c (79 aa).

The protein belongs to the bacterial ribosomal protein bL31 family. Type A subfamily. As to quaternary structure, part of the 50S ribosomal subunit.

Its subcellular location is the plastid. The protein resides in the chloroplast. Binds the 23S rRNA. The polypeptide is Large ribosomal subunit protein bL31c (Gracilaria tenuistipitata var. liui (Red alga)).